Here is a 463-residue protein sequence, read N- to C-terminus: ATP synthase subunit beta (463 aa).

Residue 152-159 (GGAGVGKT) participates in ATP binding.

This sequence belongs to the ATPase alpha/beta chains family. As to quaternary structure, F-type ATPases have 2 components, CF(1) - the catalytic core - and CF(0) - the membrane proton channel. CF(1) has five subunits: alpha(3), beta(3), gamma(1), delta(1), epsilon(1). CF(0) has three main subunits: a(1), b(2) and c(9-12). The alpha and beta chains form an alternating ring which encloses part of the gamma chain. CF(1) is attached to CF(0) by a central stalk formed by the gamma and epsilon chains, while a peripheral stalk is formed by the delta and b chains.

It is found in the cell inner membrane. It carries out the reaction ATP + H2O + 4 H(+)(in) = ADP + phosphate + 5 H(+)(out). Its function is as follows. Produces ATP from ADP in the presence of a proton gradient across the membrane. The catalytic sites are hosted primarily by the beta subunits. In Shewanella sp. (strain MR-7), this protein is ATP synthase subunit beta.